The following is a 452-amino-acid chain: Phosphoglucosamine mutase (452 aa).

The Phosphoserine intermediate role is filled by serine 103. Positions 103, 244, 246, and 248 each coordinate Mg(2+). A Phosphoserine modification is found at serine 103.

Belongs to the phosphohexose mutase family. Mg(2+) is required as a cofactor. Activated by phosphorylation.

It catalyses the reaction alpha-D-glucosamine 1-phosphate = D-glucosamine 6-phosphate. Functionally, catalyzes the conversion of glucosamine-6-phosphate to glucosamine-1-phosphate. The sequence is that of Phosphoglucosamine mutase from Fusobacterium nucleatum subsp. nucleatum (strain ATCC 25586 / DSM 15643 / BCRC 10681 / CIP 101130 / JCM 8532 / KCTC 2640 / LMG 13131 / VPI 4355).